A 186-amino-acid polypeptide reads, in one-letter code: Small ribosomal subunit protein uS5 (186 aa).

The region spanning 18–81 is the S5 DRBM domain; the sequence is FVDKLVHINR…EAAKRAMIRV (64 aa).

Belongs to the universal ribosomal protein uS5 family. As to quaternary structure, part of the 30S ribosomal subunit. Contacts proteins S4 and S8.

With S4 and S12 plays an important role in translational accuracy. Its function is as follows. Located at the back of the 30S subunit body where it stabilizes the conformation of the head with respect to the body. The chain is Small ribosomal subunit protein uS5 from Parvibaculum lavamentivorans (strain DS-1 / DSM 13023 / NCIMB 13966).